The sequence spans 645 residues: Threonine--tRNA ligase (645 aa).

Positions 1-61 (MPVITLPDGS…SDDAKLSIIT (61 aa)) constitute a TGS domain. Residues 243–534 (DHRKLGKKLD…LIEDTEGAFP (292 aa)) are catalytic. Residues Cys334, His385, and His511 each contribute to the Zn(2+) site.

This sequence belongs to the class-II aminoacyl-tRNA synthetase family. As to quaternary structure, homodimer. Zn(2+) serves as cofactor.

The protein resides in the cytoplasm. It carries out the reaction tRNA(Thr) + L-threonine + ATP = L-threonyl-tRNA(Thr) + AMP + diphosphate + H(+). In terms of biological role, catalyzes the attachment of threonine to tRNA(Thr) in a two-step reaction: L-threonine is first activated by ATP to form Thr-AMP and then transferred to the acceptor end of tRNA(Thr). Also edits incorrectly charged L-seryl-tRNA(Thr). The chain is Threonine--tRNA ligase from Marinomonas sp. (strain MWYL1).